A 137-amino-acid polypeptide reads, in one-letter code: Small ribosomal subunit protein uS12 (137 aa).

A disordered region spans residues 1-55 (MPTINQLVRKPRQSKSKKSDSPALNRNFNSKKKKFTDLNSPQKRGVCTRVGTMTP). Aspartate 102 bears the 3-methylthioaspartic acid mark. Residues 118–137 (SGVDGRRQGRSLYGTKKPKK) form a disordered region.

Belongs to the universal ribosomal protein uS12 family. Part of the 30S ribosomal subunit. Contacts proteins S8 and S17. May interact with IF1 in the 30S initiation complex.

Its function is as follows. With S4 and S5 plays an important role in translational accuracy. Functionally, interacts with and stabilizes bases of the 16S rRNA that are involved in tRNA selection in the A site and with the mRNA backbone. Located at the interface of the 30S and 50S subunits, it traverses the body of the 30S subunit contacting proteins on the other side and probably holding the rRNA structure together. The combined cluster of proteins S8, S12 and S17 appears to hold together the shoulder and platform of the 30S subunit. This Staphylococcus saprophyticus subsp. saprophyticus (strain ATCC 15305 / DSM 20229 / NCIMB 8711 / NCTC 7292 / S-41) protein is Small ribosomal subunit protein uS12.